A 455-amino-acid polypeptide reads, in one-letter code: Ribosomal protein uS12 methylthiotransferase RimO (455 aa).

An MTTase N-terminal domain is found at 1–114 (MKYHIVTLGC…INALVGQLER (114 aa)). 6 residues coordinate [4Fe-4S] cluster: C10, C46, C78, C166, C170, and C173. Residues 152–383 (THQTPSAYLK…MRLQQTISYT (232 aa)) form the Radical SAM core domain. Residues 386–455 (QRWVGRTIKV…AYDLWGEALS (70 aa)) enclose the TRAM domain.

It belongs to the methylthiotransferase family. RimO subfamily. [4Fe-4S] cluster is required as a cofactor.

It is found in the cytoplasm. It carries out the reaction L-aspartate(89)-[ribosomal protein uS12]-hydrogen + (sulfur carrier)-SH + AH2 + 2 S-adenosyl-L-methionine = 3-methylsulfanyl-L-aspartate(89)-[ribosomal protein uS12]-hydrogen + (sulfur carrier)-H + 5'-deoxyadenosine + L-methionine + A + S-adenosyl-L-homocysteine + 2 H(+). Its function is as follows. Catalyzes the methylthiolation of an aspartic acid residue of ribosomal protein uS12. The polypeptide is Ribosomal protein uS12 methylthiotransferase RimO (Chloroflexus aurantiacus (strain ATCC 29366 / DSM 635 / J-10-fl)).